The chain runs to 227 residues: 2,3-bisphosphoglycerate-dependent phosphoglycerate mutase (227 aa).

Residues 8–15, 21–22, Arg58, 110–113, Lys121, 137–138, and 181–182 each bind substrate; these read RHGKSVWN, TG, ERMY, RR, and GN. Catalysis depends on His9, which acts as the Tele-phosphohistidine intermediate. The Proton donor/acceptor role is filled by Glu110.

The protein belongs to the phosphoglycerate mutase family. BPG-dependent PGAM subfamily.

The catalysed reaction is (2R)-2-phosphoglycerate = (2R)-3-phosphoglycerate. Its pathway is carbohydrate degradation; glycolysis; pyruvate from D-glyceraldehyde 3-phosphate: step 3/5. Its function is as follows. Catalyzes the interconversion of 2-phosphoglycerate and 3-phosphoglycerate. In Chlamydia caviae (strain ATCC VR-813 / DSM 19441 / 03DC25 / GPIC) (Chlamydophila caviae), this protein is 2,3-bisphosphoglycerate-dependent phosphoglycerate mutase.